The sequence spans 344 residues: Anthranilate phosphoribosyltransferase (344 aa).

5-phospho-alpha-D-ribose 1-diphosphate is bound by residues glycine 83, glycine 86–aspartate 87, threonine 91, asparagine 93–threonine 96, lysine 111–serine 119, and serine 123. Anthranilate is bound at residue glycine 83. Serine 95 serves as a coordination point for Mg(2+). Arginine 169 provides a ligand contact to anthranilate. Residues aspartate 228 and glutamate 229 each coordinate Mg(2+).

Belongs to the anthranilate phosphoribosyltransferase family. Homodimer. Mg(2+) serves as cofactor.

It carries out the reaction N-(5-phospho-beta-D-ribosyl)anthranilate + diphosphate = 5-phospho-alpha-D-ribose 1-diphosphate + anthranilate. The protein operates within amino-acid biosynthesis; L-tryptophan biosynthesis; L-tryptophan from chorismate: step 2/5. In terms of biological role, catalyzes the transfer of the phosphoribosyl group of 5-phosphorylribose-1-pyrophosphate (PRPP) to anthranilate to yield N-(5'-phosphoribosyl)-anthranilate (PRA). The sequence is that of Anthranilate phosphoribosyltransferase from Methylibium petroleiphilum (strain ATCC BAA-1232 / LMG 22953 / PM1).